We begin with the raw amino-acid sequence, 288 residues long: ATP synthase gamma chain (288 aa).

The protein belongs to the ATPase gamma chain family. In terms of assembly, F-type ATPases have 2 components, CF(1) - the catalytic core - and CF(0) - the membrane proton channel. CF(1) has five subunits: alpha(3), beta(3), gamma(1), delta(1), epsilon(1). CF(0) has three main subunits: a, b and c.

It is found in the cell inner membrane. Produces ATP from ADP in the presence of a proton gradient across the membrane. The gamma chain is believed to be important in regulating ATPase activity and the flow of protons through the CF(0) complex. This is ATP synthase gamma chain from Aliivibrio salmonicida (strain LFI1238) (Vibrio salmonicida (strain LFI1238)).